Here is a 1469-residue protein sequence, read N- to C-terminus: uncharacterized protein (1469 aa).

Residues 146 to 180 show a composition bias toward basic and acidic residues; sequence GDHITPKEEEEKEKEKEKEKEKEKEKEKEKEKDSE. Disordered regions lie at residues 146–186, 231–255, 306–344, 430–455, 520–560, 654–706, 719–755, 881–958, and 1329–1369; these read GDHI…LQEQ, IQNNQNNQNNNDSPINKEIEDDNNN, TTTTTTTTTSSSNNCTNSISNTDKSTTTNCPPVENGGDS, LNFNNNNNNNNNNNNNNNNNSQPYHY, PVKN…NNNS, TTTT…PLVR, RTQTQLQTKIQPKSPQPQPTAAPEPQKPPTPSIVKNQ, YNNI…NIIN, and NCSS…NSSN. 5 stretches are compositionally biased toward low complexity: residues 232-241, 306-327, 430-449, 523-559, and 654-693; these read QNNQNNQNNN, TTTTTTTTTSSSNNCTNSISNT, LNFNNNNNNNNNNNNNNNNN, NNNNNNNNNNNNNNNNNNNNNNNNNNNNNNNNNINNN, and TTTTTTNTNSTNTNSTINATSPPHTPKLSSSPLLTTTTTP. Positions 719 to 731 are enriched in polar residues; that stretch reads RTQTQLQTKIQPK. Residues 732–749 show a composition bias toward pro residues; that stretch reads SPQPQPTAAPEPQKPPTP. 2 stretches are compositionally biased toward low complexity: residues 1329-1347 and 1354-1369; these read NCSSSSSSSESNGIDSGSE and RSNTTNNSNNINNSSN.

This is an uncharacterized protein from Dictyostelium discoideum (Social amoeba).